The sequence spans 347 residues: E3 ubiquitin-protein ligase ARK2C (347 aa).

Disordered regions lie at residues 23-79 (PFQR…GTLH) and 268-289 (PHKYKKRRPQDSKGKKDEGEES). The ubiquitin binding stretch occupies residues 267–269 (FPH). Over residues 276–285 (PQDSKGKKDE) the composition is skewed to basic and acidic residues. 2 residues coordinate Zn(2+): Cys-295 and Cys-298. An RING-type; atypical zinc finger spans residues 295–336 (CTICLSMLEDGEDVRRLPCMHLFHQLCVDQWLAMSKKCPICR). Residues 310–314 (RLPCM) form a ubiquitin binding region. 2 residues coordinate Zn(2+): His-318 and Cys-321.

It belongs to the Arkadia family. In terms of assembly, monomer; binding to the ubiquitin-conjugating enzyme E2 does not trigger homodimerization. In terms of tissue distribution, expressed in neurons of the nervous system.

The protein resides in the nucleus. The enzyme catalyses S-ubiquitinyl-[E2 ubiquitin-conjugating enzyme]-L-cysteine + [acceptor protein]-L-lysine = [E2 ubiquitin-conjugating enzyme]-L-cysteine + N(6)-ubiquitinyl-[acceptor protein]-L-lysine.. Its activity is regulated as follows. Binds free ubiquitin non-covalently via its RING-type zinc finger. Ubiquitin-binding leads to enhance the E3 ubiquitin-protein ligase activity by stabilizing the ubiquitin-conjugating enzyme E2 (donor ubiquitin) in the 'closed' conformation and activating ubiquitin transfer. In terms of biological role, E3 ubiquitin-protein ligase that acts as a regulator of motor axon elongation. Required for efficient motor axon extension in the dorsal forelimb by enhancing the transcriptional responses of the SMAD1/SMAD5/SMAD8 effectors, which are activated downstream of BMP. Acts by mediating ubiquitination and degradation of SMAD inhibitors such as SMAD6, SMAD7, SKI and SNON isoform of SKIL. The polypeptide is E3 ubiquitin-protein ligase ARK2C (Mus musculus (Mouse)).